The following is a 4151-amino-acid chain: Mycoketide-CoA synthase (4151 aa).

Residues 2–32 (VDQLQHATEALRKALVQVERLKRTNRALLER) adopt a coiled-coil conformation. In terms of domain architecture, Ketosynthase family 3 (KS3) 1 spans 34–457 (SEPIAIVGMS…GTNAHVIIEA (424 aa)). Module regions lie at residues 35-2038 (EPIA…RTEL) and 2057-4070 (DPIA…RREL). Cys203 acts as the Acyl-thioester intermediate; for beta-ketoacyl synthase 1 activity in catalysis. Residues His338 and His379 each act as for beta-ketoacyl synthase 1 activity in the active site. Residues 559 to 880 (VFVFPGQGSQ…AASAFVAGVA (322 aa)) form an acyltransferase 1 region. Catalysis depends on Ser650, which acts as the Acyl-ester intermediate; for acyltransferase 1 activity. The segment at 926–1048 (HPLLGAVVDL…GILRPGSVEP (123 aa)) is N-terminal hotdog fold 1. The dehydratase 1 stretch occupies residues 926–1194 (HPLLGAVVDL…VARPVTERQL (269 aa)). A PKS/mFAS DH 1 domain is found at 926–1195 (HPLLGAVVDL…ARPVTERQLL (270 aa)). His958 functions as the Proton acceptor; for dehydratase activity 1 in the catalytic mechanism. The tract at residues 1060-1195 (AVTVDVADGY…ARPVTERQLL (136 aa)) is C-terminal hotdog fold 1. The active-site Proton donor; for dehydratase activity 1 is Asp1120. The enoyl reductase 1 stretch occupies residues 1366–1671 (GTFENLRLEP…QARHTGKVVM (306 aa)). The tract at residues 1680-1858 (GTVLITGGTG…AISLGWGLWD (179 aa)) is beta-ketoacyl reductase 1. Tyr1828 acts as the For beta-ketoacyl reductase 1 activity in catalysis. The region spanning 1963 to 2038 (AVLLGLVRLH…RLASYIRTEL (76 aa)) is the Carrier 1 domain. Residue Ser1998 is modified to O-(pantetheine 4'-phosphoryl)serine. A Ketosynthase family 3 (KS3) 2 domain is found at 2056-2480 (EDPIAIVGMA…GTNAHVIIEA (425 aa)). Catalysis depends on Cys2226, which acts as the Acyl-thioester intermediate; for beta-ketoacyl synthase 2 activity. Active-site for beta-ketoacyl synthase 2 activity residues include His2361 and His2402. Residues 2582 to 2893 (VFVFPGQGSQ…AVAQGFVTGM (312 aa)) are acyltransferase 2. Ser2672 functions as the Acyl-ester intermediate; for acyltransferase 2 activity in the catalytic mechanism. Positions 2940 to 3062 (HALLGAVIDL…GALRAGSAEP (123 aa)) are N-terminal hotdog fold 2. The tract at residues 2940 to 3215 (HALLGAVIDL…ARPVTDQQLR (276 aa)) is dehydratase 2. The PKS/mFAS DH 2 domain maps to 2940–3215 (HALLGAVIDL…ARPVTDQQLR (276 aa)). The active-site Proton acceptor; for dehydratase activity 2 is His2972. A C-terminal hotdog fold 2 region spans residues 3074–3215 (AVPVEVADGY…ARPVTDQQLR (142 aa)). Asp3135 acts as the Proton donor; for dehydratase activity 2 in catalysis. Residues 3395–3701 (GTFENLRLEL…QARHTGKVVM (307 aa)) are enoyl reductase 2. The tract at residues 3710 to 3888 (GTVLITGGTG…AISLGWGLWD (179 aa)) is beta-ketoacyl reductase 2. Catalysis depends on Tyr3858, which acts as the For beta-ketoacyl reductase 2 activity. In terms of domain architecture, Carrier 2 spans 3995–4070 (AVLLDLVRSH…ALAGYMRREL (76 aa)). Ser4030 carries the post-translational modification O-(pantetheine 4'-phosphoryl)serine.

As to quaternary structure, forms a large supramolecular assembly mediated through specific interactions between the N- and C-terminus linkers.

The catalysed reaction is a medium-chain fatty acyl-CoA + 5 (S)-methylmalonyl-CoA + 5 malonyl-CoA + 22 NADPH + 32 H(+) = a mycoketide-CoA + 10 CO2 + 22 NADP(+) + 10 CoA + 11 H2O. It functions in the pathway lipid metabolism; fatty acid metabolism. Involved in the synthesis of beta-D-mannosyl phosphomycoketide (MPM), an antigenic mycobacterial polyketide. Binds a fatty acyl-CoA as a starter unit, and extends it by five rounds of alternative additions of malonyl-CoA and methylmalonyl-CoA extender units. Depending on the starter unit, the enzyme forms mycoketide-CoAs of different lengths. Shows preference for small-/medium-chain starter fatty acyl substrates. Uses a hybrid modularly iterative mechanism, by forming a supramolecular assembly to perform repetitive cycles of iterations. This chain is Mycoketide-CoA synthase, found in Mycobacterium tuberculosis (strain ATCC 25618 / H37Rv).